The primary structure comprises 778 residues: MKMTVDFEECLKDSPRFRAALEEVEGDVAELELKLDKLVKLCIAMIDTGKAFCVANKQFMNGIRDLAQYSSNDAVVETSLTKFSDSLQEMINFHTILFDQTQRSIKAQLQNFVKEDLRKFKDAKKQFEKVSEEKENALVKNAQVQRNKQHEVEEATNILTATRKCFRHIALDYVLQINVLQSKRRSEILKSMLSFMYAHLAFFHQGYDLFSELGPYMKDLGAQLDRLVVDAAKEKREMEQKHSTIQQKDFSSDDSKLEYNVDAANGIVMEGYLFKRASNAFKTWNRRWFSIQNNQLVYQKKFKDNPTVVVEDLRLCTVKHCEDIERRFCFEVVSPTKSCMLQADSEKLRQAWIKAVQTSIATAYREKGDESEKLDKKSSPSTGSLDSGNESKEKLLKGESALQRVQCIPGNASCCDCGLADPRWASINLGITLCIECSGIHRSLGVHFSKVRSLTLDTWEPELLKLMCELGNDVINRVYEANVEKMGIKKPQPGQRQEKEAYIRAKYVERKFVDKYSISLSPPEQQKKFVSKSSEEKRLSISKFGPGDQVRASAQSSVRSNDSGIQQSSDDGRESLPSTVSANSLYEPEGERQDSSMFLDSKHLNPGLQLYRASYEKNLPKMAEALAHGADVNWANSEENKATPLIQAVLGGSLVTCEFLLQNGANVNQRDVQGRGPLHHATVLGHTGQVCLFLKRGANQHATDEEGKDPLSIAVEAANADIVTLLRLARMNEEMRESEGLYGQPGDETYQDIFRDFSQMASNNPEKLNRFQQDSQKF.

Positions 1-226 (MKMTVDFEEC…MKDLGAQLDR (226 aa)) constitute a BAR domain. The PH domain maps to 266-361 (GIVMEGYLFK…WIKAVQTSIA (96 aa)). The tract at residues 371-391 (SEKLDKKSSPSTGSLDSGNES) is disordered. Residues 379 to 388 (SPSTGSLDSG) are compositionally biased toward polar residues. 2 positions are modified to phosphoserine: serine 384 and serine 387. In terms of domain architecture, Arf-GAP spans 399 to 520 (ESALQRVQCI…KFVDKYSISL (122 aa)). A C4-type zinc finger spans residues 414 to 437 (CCDCGLADPRWASINLGITLCIEC). Serine 521 bears the Phosphoserine mark. The disordered stretch occupies residues 540-599 (SISKFGPGDQVRASAQSSVRSNDSGIQQSSDDGRESLPSTVSANSLYEPEGERQDSSMFL). A compositionally biased stretch (polar residues) spans 552–569 (ASAQSSVRSNDSGIQQSS). Residues serine 581 and serine 584 each carry the phosphoserine modification. ANK repeat units follow at residues 640–669 (NKAT…NVNQ), 673–702 (QGRG…NQHA), and 706–735 (EGKD…NEEM). Tyrosine 742 bears the Phosphotyrosine mark. A Phosphoserine modification is found at serine 775.

In terms of assembly, interacts (via KANK domains) with RAB35 (GTP-bound form); the interaction is direct and probably recruits ACAP2 to membranes including plasma membrane. Interacts with MICALL1; the interaction is indirect through RAB35. Widely expressed. Highest level in lung.

It is found in the cell membrane. The protein resides in the endosome membrane. GAP activity stimulated by phosphatidylinositol 4,5-bisphosphate (PIP2) and phosphatidic acid. Its function is as follows. GTPase-activating protein (GAP) for ADP ribosylation factor 6 (ARF6). Doesn't show GAP activity for RAB35. This chain is Arf-GAP with coiled-coil, ANK repeat and PH domain-containing protein 2 (ACAP2), found in Homo sapiens (Human).